The chain runs to 210 residues: LESDFADMDVIGISGNFCSDKKPAAVNWIEGRGKSVVCEAIIKEEVVKKVLKTDVALLVELNMLKNLAGSAVAGALGGFNAHAGNIVSAIFIATGQDPAQNVESSHCITMMEAVNDGKDLHISVTLPSIEVGTVGGGTQLASQSACLNLLGVMGACKESPGSYSRLLATIVAGSVLAGELSLMSAIAAGQLVKSHMKYNRSSKDVSKAAS.

Catalysis depends on charge relay system residues K21 and D97. A helical transmembrane segment spans residues 166–186 (LLATIVAGSVLAGELSLMSAI). H195 (proton donor) is an active-site residue. N199 carries N-linked (GlcNAc...) asparagine glycosylation.

This sequence belongs to the HMG-CoA reductase family.

The protein resides in the endoplasmic reticulum membrane. It is found in the mitochondrion membrane. It localises to the plastid membrane. It carries out the reaction (R)-mevalonate + 2 NADP(+) + CoA = (3S)-3-hydroxy-3-methylglutaryl-CoA + 2 NADPH + 2 H(+). The protein operates within metabolic intermediate biosynthesis; (R)-mevalonate biosynthesis; (R)-mevalonate from acetyl-CoA: step 3/3. Functionally, catalyzes the synthesis of mevalonate. The specific precursor of all isoprenoid compounds present in plants. The protein is 3-hydroxy-3-methylglutaryl-coenzyme A reductase 2 (HMGR2) of Hevea brasiliensis (Para rubber tree).